A 351-amino-acid chain; its full sequence is GDSL esterase/lipase At3g53100 (351 aa).

The N-terminal stretch at 1–24 is a signal peptide; the sequence is MQKMRVSGFRVLLLVSCFFCKSKG. Catalysis depends on serine 36, which acts as the Nucleophile. N-linked (GlcNAc...) asparagine glycosylation is found at asparagine 234, asparagine 254, and asparagine 318. Catalysis depends on residues aspartate 326 and histidine 329.

The protein belongs to the 'GDSL' lipolytic enzyme family.

It is found in the secreted. This Arabidopsis thaliana (Mouse-ear cress) protein is GDSL esterase/lipase At3g53100.